We begin with the raw amino-acid sequence, 611 residues long: uncharacterized protein (611 aa).

The SAC domain occupies 51–351 (LYGFIRLKIY…DYHKQGSRNL (301 aa)).

It to yeast RSD1 and S.pombe SpBC19F5.03.

This is an uncharacterized protein from Schizosaccharomyces pombe (strain 972 / ATCC 24843) (Fission yeast).